The sequence spans 374 residues: Cysteine-type anaerobic sulfatase-maturating enzyme (374 aa).

Positions 1-227 (MKSLSMLIKP…LNKLFDLWFK (227 aa)) constitute a Radical SAM core domain. Cys15 and Cys19 together coordinate [4Fe-4S] cluster. Position 21 (Tyr21) interacts with S-adenosyl-L-methionine. A [4Fe-4S] cluster-binding site is contributed by Cys22. S-adenosyl-L-methionine is bound by residues Gly66, Ser122, Arg134, and Leu195. [4Fe-4S] cluster is bound by residues Cys255, Cys261, and Cys276. Residue Asp277 is the Proton acceptor of the active site. Residues Cys317, Cys320, Cys326, Cys330, and Cys348 each coordinate [4Fe-4S] cluster.

This sequence belongs to the radical SAM superfamily. Anaerobic sulfatase-maturating enzyme family. It depends on [4Fe-4S] cluster as a cofactor.

It carries out the reaction L-cysteinyl-[sulfatase] + S-adenosyl-L-methionine + H2O = 3-oxo-L-alanyl-[sulfatase] + hydrogen sulfide + 5'-deoxyadenosine + L-methionine + 2 H(+). The protein operates within protein modification; sulfatase oxidation. Functionally, involved in 'Cys-type' sulfatase maturation under anaerobic conditions. Catalyzes the post-translational modification of cysteine into 3-oxoalanine (also known as C(alpha)-formylglycine (FGly)), by a free radical chemical mechanism initiated via the reductive cleavage of S-adenosyl-L-methionine (SAM). The chain is Cysteine-type anaerobic sulfatase-maturating enzyme from Clostridium novyi (strain NT).